Here is a 313-residue protein sequence, read N- to C-terminus: Malate dehydrogenase (313 aa).

NAD(+) is bound by residues 8–13 and D33; that span reads GAGNVG. Positions 83 and 89 each coordinate substrate. Residues N96 and 119–121 contribute to the NAD(+) site; that span reads ISN. 2 residues coordinate substrate: N121 and R152. The active-site Proton acceptor is H176.

The protein belongs to the LDH/MDH superfamily. MDH type 3 family.

It catalyses the reaction (S)-malate + NAD(+) = oxaloacetate + NADH + H(+). In terms of biological role, catalyzes the reversible oxidation of malate to oxaloacetate. The chain is Malate dehydrogenase from Bacteroides fragilis (strain ATCC 25285 / DSM 2151 / CCUG 4856 / JCM 11019 / LMG 10263 / NCTC 9343 / Onslow / VPI 2553 / EN-2).